We begin with the raw amino-acid sequence, 807 residues long: Serine/threonine-protein kinase AfsK (807 aa).

Residues 16–272 (FEVLGRLGAG…QAQLAPHLFA (257 aa)) form the Protein kinase domain. Residues 22–30 (LGAGGMGLV) and lysine 44 each bind ATP. The residue at position 71 (serine 71) is a Phosphoserine; by autocatalysis. Aspartate 138 serves as the catalytic Proton acceptor. Threonine 168 carries the phosphothreonine; by autocatalysis modification. 2 disordered regions span residues 292 to 328 (MIERRRGGRRTARRPPRPRPRRLRAAPQGPGAGHRLA) and 353 to 429 (AGPS…PSPA). A compositionally biased stretch (basic residues) spans 297 to 315 (RGGRRTARRPPRPRPRRLR). A compositionally biased stretch (low complexity) spans 353-363 (AGPSAAPDGGP).

Belongs to the protein kinase superfamily. Ser/Thr protein kinase family. In terms of assembly, interacts (via the N-terminal kinase domain) with KbpA; the interaction prevents autophosphorylation of AfsK. In terms of processing, autophosphorylated mainly on threonine residues. Some phosphorylation on serine residues. Autophosphorylation on Thr-168 is the major site enhancing kinase activity towards AfsR, and is regulated though interaction with KbpA.

It carries out the reaction L-seryl-[protein] + ATP = O-phospho-L-seryl-[protein] + ADP + H(+). The enzyme catalyses L-threonyl-[protein] + ATP = O-phospho-L-threonyl-[protein] + ADP + H(+). Functionally, component of the AfsK/AfsR system involved in the response of aerial mycelium formation to glucose. This chain is Serine/threonine-protein kinase AfsK (afsK), found in Streptomyces griseus.